We begin with the raw amino-acid sequence, 110 residues long: Ribonuclease P protein component 1 (110 aa).

The protein belongs to the eukaryotic/archaeal RNase P protein component 1 family. As to quaternary structure, consists of a catalytic RNA component and at least 4-5 protein subunits.

Its subcellular location is the cytoplasm. It catalyses the reaction Endonucleolytic cleavage of RNA, removing 5'-extranucleotides from tRNA precursor.. In terms of biological role, part of ribonuclease P, a protein complex that generates mature tRNA molecules by cleaving their 5'-ends. This Aeropyrum pernix (strain ATCC 700893 / DSM 11879 / JCM 9820 / NBRC 100138 / K1) protein is Ribonuclease P protein component 1.